A 201-amino-acid polypeptide reads, in one-letter code: Holliday junction branch migration complex subunit RuvA (201 aa).

Residues 1–63 form a domain I region; the sequence is MIEFVRGYVD…EDTLALYGFR (63 aa). Residues 64-142 are domain II; the sequence is TREERTLFAK…AVTAKTFPDL (79 aa). Residues 143–153 are flexible linker; the sequence is FHLQEESARPH. Positions 153–201 are domain III; sequence HLSALEEAIEALKALGYAEREIQKVVPSLMKENLSTDQYVKRALQQLLK.

Belongs to the RuvA family. In terms of assembly, homotetramer. Forms an RuvA(8)-RuvB(12)-Holliday junction (HJ) complex. HJ DNA is sandwiched between 2 RuvA tetramers; dsDNA enters through RuvA and exits via RuvB. An RuvB hexamer assembles on each DNA strand where it exits the tetramer. Each RuvB hexamer is contacted by two RuvA subunits (via domain III) on 2 adjacent RuvB subunits; this complex drives branch migration. In the full resolvosome a probable DNA-RuvA(4)-RuvB(12)-RuvC(2) complex forms which resolves the HJ.

It is found in the cytoplasm. Its function is as follows. The RuvA-RuvB-RuvC complex processes Holliday junction (HJ) DNA during genetic recombination and DNA repair, while the RuvA-RuvB complex plays an important role in the rescue of blocked DNA replication forks via replication fork reversal (RFR). RuvA specifically binds to HJ cruciform DNA, conferring on it an open structure. The RuvB hexamer acts as an ATP-dependent pump, pulling dsDNA into and through the RuvAB complex. HJ branch migration allows RuvC to scan DNA until it finds its consensus sequence, where it cleaves and resolves the cruciform DNA. The polypeptide is Holliday junction branch migration complex subunit RuvA (Geobacillus sp. (strain WCH70)).